The following is a 159-amino-acid chain: Transcription elongation factor A protein-like 1 (159 aa).

Residues Met-1–Glu-99 are disordered. Positions Lys-17–Leu-34 are enriched in basic and acidic residues. Acidic residues predominate over residues Gln-37–Leu-54. Residues Ser-64–Glu-80 show a composition bias toward basic and acidic residues.

The protein belongs to the TFS-II family. TFA subfamily.

It localises to the nucleus. In terms of biological role, may be involved in transcriptional regulation. Modulates various viral and cellular promoters in a promoter context-dependent manner. Does not bind DNA directly. The protein is Transcription elongation factor A protein-like 1 of Ateles geoffroyi (Black-handed spider monkey).